A 572-amino-acid polypeptide reads, in one-letter code: Proline--tRNA ligase (572 aa).

It belongs to the class-II aminoacyl-tRNA synthetase family. ProS type 1 subfamily. As to quaternary structure, homodimer.

The protein localises to the cytoplasm. It carries out the reaction tRNA(Pro) + L-proline + ATP = L-prolyl-tRNA(Pro) + AMP + diphosphate. In terms of biological role, catalyzes the attachment of proline to tRNA(Pro) in a two-step reaction: proline is first activated by ATP to form Pro-AMP and then transferred to the acceptor end of tRNA(Pro). As ProRS can inadvertently accommodate and process non-cognate amino acids such as alanine and cysteine, to avoid such errors it has two additional distinct editing activities against alanine. One activity is designated as 'pretransfer' editing and involves the tRNA(Pro)-independent hydrolysis of activated Ala-AMP. The other activity is designated 'posttransfer' editing and involves deacylation of mischarged Ala-tRNA(Pro). The misacylated Cys-tRNA(Pro) is not edited by ProRS. The polypeptide is Proline--tRNA ligase (Hydrogenovibrio crunogenus (strain DSM 25203 / XCL-2) (Thiomicrospira crunogena)).